Consider the following 461-residue polypeptide: Argininosuccinate lyase (461 aa).

The protein belongs to the lyase 1 family. Argininosuccinate lyase subfamily.

Its subcellular location is the cytoplasm. It carries out the reaction 2-(N(omega)-L-arginino)succinate = fumarate + L-arginine. It participates in amino-acid biosynthesis; L-arginine biosynthesis; L-arginine from L-ornithine and carbamoyl phosphate: step 3/3. The polypeptide is Argininosuccinate lyase (Chloroflexus aurantiacus (strain ATCC 29366 / DSM 635 / J-10-fl)).